A 326-amino-acid polypeptide reads, in one-letter code: Protoheme IX farnesyltransferase (326 aa).

Transmembrane regions (helical) follow at residues 35 to 55 (LIPLLLATTLGGMALTEGWPL), 60 to 80 (LICTLGGGALASAAAGVLNCL), 106 to 126 (TAFIGAIACTLVAAMLLVSGV), 129 to 149 (LAAGLSLLGLCSYVLLYTALL), 157 to 177 (IVVGGVAGAIPPLVGAAAATG), 185 to 205 (WLFALVMVWTPAHFWALALLL), 238 to 258 (VLLSGFGILALPTGGLFYGLM), and 289 to 309 (WSILYLFGICLLLILSRSALA).

It belongs to the UbiA prenyltransferase family. Protoheme IX farnesyltransferase subfamily.

It is found in the cell inner membrane. It catalyses the reaction heme b + (2E,6E)-farnesyl diphosphate + H2O = Fe(II)-heme o + diphosphate. It participates in porphyrin-containing compound metabolism; heme O biosynthesis; heme O from protoheme: step 1/1. Functionally, converts heme B (protoheme IX) to heme O by substitution of the vinyl group on carbon 2 of heme B porphyrin ring with a hydroxyethyl farnesyl side group. This is Protoheme IX farnesyltransferase from Synechococcus sp. (strain CC9902).